Consider the following 397-residue polypeptide: Phosphopentomutase (397 aa).

Residues aspartate 12, aspartate 289, histidine 294, aspartate 330, histidine 331, and histidine 342 each contribute to the Mn(2+) site.

This sequence belongs to the phosphopentomutase family. It depends on Mn(2+) as a cofactor.

Its subcellular location is the cytoplasm. The catalysed reaction is 2-deoxy-alpha-D-ribose 1-phosphate = 2-deoxy-D-ribose 5-phosphate. It catalyses the reaction alpha-D-ribose 1-phosphate = D-ribose 5-phosphate. It participates in carbohydrate degradation; 2-deoxy-D-ribose 1-phosphate degradation; D-glyceraldehyde 3-phosphate and acetaldehyde from 2-deoxy-alpha-D-ribose 1-phosphate: step 1/2. Isomerase that catalyzes the conversion of deoxy-ribose 1-phosphate (dRib-1-P) and ribose 1-phosphate (Rib-1-P) to deoxy-ribose 5-phosphate (dRib-5-P) and ribose 5-phosphate (Rib-5-P), respectively. The protein is Phosphopentomutase of Limosilactobacillus reuteri (strain DSM 20016) (Lactobacillus reuteri).